Consider the following 147-residue polypeptide: 3-dehydroquinate dehydratase (147 aa).

Catalysis depends on Tyr-25, which acts as the Proton acceptor. Substrate contacts are provided by Asn-76, His-82, and Asp-89. Residue His-102 is the Proton donor of the active site. Residues 103 to 104 and Arg-113 contribute to the substrate site; that span reads IS.

It belongs to the type-II 3-dehydroquinase family. As to quaternary structure, homododecamer.

The catalysed reaction is 3-dehydroquinate = 3-dehydroshikimate + H2O. Its pathway is metabolic intermediate biosynthesis; chorismate biosynthesis; chorismate from D-erythrose 4-phosphate and phosphoenolpyruvate: step 3/7. In terms of biological role, catalyzes a trans-dehydration via an enolate intermediate. The protein is 3-dehydroquinate dehydratase of Mycobacterium tuberculosis (strain ATCC 25177 / H37Ra).